A 66-amino-acid chain; its full sequence is Large ribosomal subunit protein uL29 (66 aa).

The protein belongs to the universal ribosomal protein uL29 family.

This chain is Large ribosomal subunit protein uL29, found in Helicobacter pylori (strain P12).